We begin with the raw amino-acid sequence, 157 residues long: Polyferredoxin protein VhcB (157 aa).

4Fe-4S ferredoxin-type domains follow at residues 23–52, 62–92, and 100–129; these read NGIS…VVNP, KTER…MGKI, and DRIE…LNEE. [4Fe-4S] cluster contacts are provided by cysteine 32, cysteine 35, cysteine 38, cysteine 42, cysteine 72, cysteine 75, cysteine 78, cysteine 82, cysteine 109, cysteine 112, cysteine 115, cysteine 119, cysteine 136, cysteine 139, cysteine 142, and cysteine 146.

[4Fe-4S] cluster is required as a cofactor.

This is Polyferredoxin protein VhcB (vhcB) from Methanococcus voltae.